We begin with the raw amino-acid sequence, 206 residues long: 2-oxoglutarate-dependent dioxygenase iboH (206 aa).

A Fe2OG dioxygenase domain is found at 51-157 (PSTTTLVLLH…RYSIAYFLRP (107 aa)). Positions 75, 77, and 134 each coordinate Fe cation. Arg148 serves as a coordination point for 2-oxoglutarate.

The protein belongs to the iron/ascorbate-dependent oxidoreductase family. It depends on Fe(2+) as a cofactor.

It carries out the reaction L-glutamate + 2-oxoglutarate + O2 = (3R)-3-hydroxy-L-glutamate + succinate + CO2. It participates in secondary metabolite biosynthesis. Functionally, 2-oxoglutarate-dependent dioxygenase; part of the gene cluster that mediates the biosynthesis of the psychoactive metabolites ibotenic acid and muscimol. The first committed step is glutamate hydroxylation by the 2-oxoglutarate-dependent dioxygenase iboH, and the last step is decarboxylation of ibotenic acid to muscimol by the decarboxylase iboD. The order of the intermediate reactions is somewhat ambiguous. IboA likely activates the carboxylic acid at position 5 to introduce an amide bond, and the flavin monooxygenase iboF generates the N-O bond. There are several options for the latter step. One option is that iboF directly hydroxylates the amide nitrogen formed by iboA to produce a hydroxamic acid species. Another option is that iboF hydroxylates an external N-containing compound, whose resulting N-O bond is subsequently introduced into the hydroxyglutamate scaffold. The paralogous PLP-dependent cystathionine gamma-synthase-like enzymes iboG1 and iboG2 are likely involved in substitution of the OH group at position 3 by the O-N moiety. The first cyclic intermediate is most probably tricholomic acid which is likely desaturated to ibotenic acid by the cytochrome P450 monooxygenase iboC. This chain is 2-oxoglutarate-dependent dioxygenase iboH, found in Amanita muscaria (strain Koide BX008).